A 226-amino-acid polypeptide reads, in one-letter code: Urease accessory protein UreF (226 aa).

It belongs to the UreF family. UreD, UreF and UreG form a complex that acts as a GTP-hydrolysis-dependent molecular chaperone, activating the urease apoprotein by helping to assemble the nickel containing metallocenter of UreC. The UreE protein probably delivers the nickel.

The protein localises to the cytoplasm. In terms of biological role, required for maturation of urease via the functional incorporation of the urease nickel metallocenter. The chain is Urease accessory protein UreF from Paraburkholderia phymatum (strain DSM 17167 / CIP 108236 / LMG 21445 / STM815) (Burkholderia phymatum).